We begin with the raw amino-acid sequence, 299 residues long: uncharacterized protein (299 aa).

Residues 1-20 (MTTKHELVINTNEPSAPNAD) form a disordered region. Residues 172–192 (SFFIPPMVVISTPICLGLTVF) form a helical membrane-spanning segment.

This sequence belongs to the IIV-6 259R family.

Its subcellular location is the membrane. This is an uncharacterized protein from Acheta domesticus (House cricket).